Here is a 474-residue protein sequence, read N- to C-terminus: Citrate synthase 4, mitochondrial (474 aa).

A mitochondrion-targeting transit peptide spans 1 to 16; sequence MVFFRSVSAFTRLRSR. Active-site residues include H308, H354, and D409.

It belongs to the citrate synthase family. As to quaternary structure, homodimer.

Its subcellular location is the mitochondrion matrix. The catalysed reaction is oxaloacetate + acetyl-CoA + H2O = citrate + CoA + H(+). Its pathway is carbohydrate metabolism; tricarboxylic acid cycle; isocitrate from oxaloacetate: step 1/2. The protein is Citrate synthase 4, mitochondrial (CSY4) of Arabidopsis thaliana (Mouse-ear cress).